The primary structure comprises 241 residues: Phosphoadenosine 5'-phosphosulfate reductase (241 aa).

Cys235 functions as the Nucleophile; cysteine thiosulfonate intermediate in the catalytic mechanism.

It belongs to the PAPS reductase family. CysH subfamily.

The protein localises to the cytoplasm. It catalyses the reaction [thioredoxin]-disulfide + sulfite + adenosine 3',5'-bisphosphate + 2 H(+) = [thioredoxin]-dithiol + 3'-phosphoadenylyl sulfate. It participates in sulfur metabolism; hydrogen sulfide biosynthesis; sulfite from sulfate: step 3/3. Catalyzes the formation of sulfite from phosphoadenosine 5'-phosphosulfate (PAPS) using thioredoxin as an electron donor. The sequence is that of Phosphoadenosine 5'-phosphosulfate reductase from Xanthomonas campestris pv. campestris (strain 8004).